A 770-amino-acid chain; its full sequence is POU domain, class 2, transcription factor 1 (770 aa).

Residues 1 to 26 show a composition bias toward polar residues; it reads MNNPSETNKSSMESEDASTGTQTNGL. 4 disordered regions span residues 1-33, 68-97, 262-285, and 357-385; these read MNNPSETNKSSMESEDASTGTQTNGLDFQKQPV, LNVQSKSSEESGDSQQSSQPSSQPPSVQSA, VQTLPQSQSTPKRIDTPSLEEPSD, and LSSDSTASSPSALNSPGLGAEGLNRRRKK. The span at 80 to 97 shows a compositional bias: low complexity; the sequence is DSQQSSQPSSQPPSVQSA. The segment covering 262–272 has biased composition (polar residues); sequence VQTLPQSQSTP. Residues Thr-271 and Thr-277 each carry the phosphothreonine modification. Residues 281–355 enclose the POU-specific domain; the sequence is EEPSDLEELE…LLEKWLNDAE (75 aa). Position 284 is a phosphoserine (Ser-284). A compositionally biased stretch (low complexity) spans 357–372; sequence LSSDSTASSPSALNSP. The homeobox DNA-binding region spans 382–441; it reads RRKKRTSIETNIRVALEKSFMENQKPTSEDITLIAEQLNMEKEVIRVWFCNRRQKEKRIN. Phosphoserine occurs at positions 388 and 451. The span at 519–580 shows a compositional bias: low complexity; it reads TTTAGTTDST…TNTTQTTSTP (62 aa). The segment at 519 to 589 is disordered; it reads TTTAGTTDST…PLPSPLGASQ (71 aa).

Belongs to the POU transcription factor family. Class-2 subfamily. Interacts with POU2AF1; the interaction increases POU2F1 transactivation activity. Interacts with NR3C1, AR, PGR and HCFC1. Phosphorylated by PRKDC. As to expression, ubiquitously expressed. However, isoforms 4 and 5 are only expressed in lymphocytes.

It localises to the nucleus. Functionally, transcription factor that binds to the octamer motif (5'-ATTTGCAT-3') and activates the promoters of the genes for some small nuclear RNAs (snRNA) and of genes such as those for histone H2B and immunoglobulins. Modulates transcription transactivation by NR3C1, AR and PGR. This chain is POU domain, class 2, transcription factor 1 (Pou2f1), found in Mus musculus (Mouse).